Reading from the N-terminus, the 180-residue chain is Crossover junction endodeoxyribonuclease RuvC (180 aa).

Residues Asp-7, Glu-66, and Asp-138 contribute to the active site. 3 residues coordinate Mg(2+): Asp-7, Glu-66, and Asp-138.

The protein belongs to the RuvC family. In terms of assembly, homodimer which binds Holliday junction (HJ) DNA. The HJ becomes 2-fold symmetrical on binding to RuvC with unstacked arms; it has a different conformation from HJ DNA in complex with RuvA. In the full resolvosome a probable DNA-RuvA(4)-RuvB(12)-RuvC(2) complex forms which resolves the HJ. Mg(2+) is required as a cofactor.

Its subcellular location is the cytoplasm. The catalysed reaction is Endonucleolytic cleavage at a junction such as a reciprocal single-stranded crossover between two homologous DNA duplexes (Holliday junction).. The RuvA-RuvB-RuvC complex processes Holliday junction (HJ) DNA during genetic recombination and DNA repair. Endonuclease that resolves HJ intermediates. Cleaves cruciform DNA by making single-stranded nicks across the HJ at symmetrical positions within the homologous arms, yielding a 5'-phosphate and a 3'-hydroxyl group; requires a central core of homology in the junction. The consensus cleavage sequence is 5'-(A/T)TT(C/G)-3'. Cleavage occurs on the 3'-side of the TT dinucleotide at the point of strand exchange. HJ branch migration catalyzed by RuvA-RuvB allows RuvC to scan DNA until it finds its consensus sequence, where it cleaves and resolves the cruciform DNA. The sequence is that of Crossover junction endodeoxyribonuclease RuvC from Burkholderia thailandensis (strain ATCC 700388 / DSM 13276 / CCUG 48851 / CIP 106301 / E264).